The primary structure comprises 200 residues: MGLHSEPLDQEDQDTIILDARAGDLDSLKDIFTTLVSPELLSTCKESESDSTALHMAAANGHIETVRYILETVSRANSAEDLKAFVNEVNKTGNTALHWASLNGKLDVVKLLCDEYEADPFIRNKFGHDAIFEAENSGKEEVETYFLKKYDVEPEDDEEDTQTEGKNSVQITKGTEIEQVTKEATEALREETEKLNINKD.

ANK repeat units follow at residues 49–78 and 92–121; these read SDST…RANS and TGNT…ADPF. Ser78 is subject to Phosphoserine. The segment at 152–173 is disordered; it reads VEPEDDEEDTQTEGKNSVQITK. A compositionally biased stretch (acidic residues) spans 153 to 162; the sequence is EPEDDEEDTQ. A compositionally biased stretch (polar residues) spans 164 to 173; it reads EGKNSVQITK.

In terms of biological role, required for normal rate of cell proliferation. This chain is Ankyrin repeat-containing protein YAR1 (YAR1), found in Saccharomyces cerevisiae (strain ATCC 204508 / S288c) (Baker's yeast).